A 389-amino-acid polypeptide reads, in one-letter code: Na(+)/H(+) antiporter NhaA (389 aa).

11 consecutive transmembrane segments (helical) span residues 17-37 (ILLL…LAGL), 59-79 (LLLW…GLEV), 95-115 (SLPT…YLLF), 124-144 (AGWA…MALL), 154-174 (VFLL…IALF), 177-197 (TDLS…LVAL), 213-233 (LVLW…GVII), 261-281 (FLIL…NMSL), 287-307 (PVPV…VMLF), 328-348 (IAPV…IASL), and 363-383 (LGTL…LSKV).

It belongs to the NhaA Na(+)/H(+) (TC 2.A.33) antiporter family.

It is found in the cell inner membrane. The enzyme catalyses Na(+)(in) + 2 H(+)(out) = Na(+)(out) + 2 H(+)(in). Na(+)/H(+) antiporter that extrudes sodium in exchange for external protons. In Shewanella sp. (strain MR-4), this protein is Na(+)/H(+) antiporter NhaA.